The following is an 875-amino-acid chain: MGKTVASLGQGTRPDPVRSFNRWKKKHSHRQHQKKERRKQLKKPEWQVEREGISRLMQNYEKINVNEITRFSDFPLSKKTLKGLQEAQYRLVTEIQKQTIGLALQGKDVLGAAKTGSGKTLAFLVPVLEALYRLQWTSTDGLGVLIISPTRELAYQTFEVLRKVGKNHDFSAGLIIGGKDLKHEAERINNINILVCTPGRLLQHMDETICFHATNLQMLVLDEADRILDMGFADTMNAIIENLPKKRQTLLFSATQTKSVKDLARLSLKDPEYVWVHEKAKYSTPATLEQNYIICELHQKISVLFSFLRSHLKKKSIVFFSSCKEVQYLYRVFCRLRPGISILALHGRQQQMRRMEVYNEFVRKRAAVLFATDIAARGLDFPAVNWVLQFDCPEDANTYIHRAGRTARYKEDGEALLILLPSEEQGMVQQLLQKKVPVKEIKINPEKLIDVQKKLESFLAQDQDLKERAQRCFVSYIRSVYLMKDKEVFNVSKLPITEYALSLGLAVAPRIRFLQKLEKQPSTELVKNPVTEAVPPRAPSLPNDEADESPAYVSEKMSVLHKSGERLEETEHRLASGDGDEEQDEETEDEETEDHLGKAREPHTESVVSIEEAQKVKEVSVQFLNRDDDDEDGPDADFLTVKRRDVFGLDLKENEALSKKEPSKSSVKKKLTKVAEAKKVMKRSFKVNKKITFTDEGELVQQWPQIQKCAIKDVEEEDDTGGINLDKAKERLQEEDKFDKEEYRKKIKAKHRERRLKEREARREANKRQAKARDEEEAFLDWSDEDDGGFDPSTLPDPDKHRSSEESESEDTNHKMSDTKKKQETRKRNNTEDDDVRPRSRHGKKAKWETVEPLDTGLSLAEDEELVLHLLKSQN.

Residues 1–44 form a disordered region; the sequence is MGKTVASLGQGTRPDPVRSFNRWKKKHSHRQHQKKERRKQLKKP. The residue at position 4 (Thr-4) is a Phosphothreonine. Phosphoserine is present on Ser-7. Basic residues predominate over residues 21-41; it reads NRWKKKHSHRQHQKKERRKQL. The Q motif motif lies at 69 to 97; it reads TRFSDFPLSKKTLKGLQEAQYRLVTEIQK. Residues 89–91, Gln-96, and 113–120 contribute to the ATP site; these read YRL and AKTGSGKT. The Helicase ATP-binding domain occupies 100-274; that stretch reads IGLALQGKDV…RLSLKDPEYV (175 aa). Residues 222 to 225 carry the DEAD box motif; sequence DEAD. In terms of domain architecture, Helicase C-terminal spans 300-449; it reads KISVLFSFLR…EIKINPEKLI (150 aa). A disordered region spans residues 525–612; that stretch reads LVKNPVTEAV…HTESVVSIEE (88 aa). Ser-540 bears the Phosphoserine mark. Position 556 is an N6-acetyllysine (Lys-556). Residues 562–575 show a composition bias toward basic and acidic residues; that stretch reads KSGERLEETEHRLA. The segment covering 578–593 has biased composition (acidic residues); the sequence is DGDEEQDEETEDEETE. A Phosphothreonine modification is found at Thr-587. The segment covering 594–604 has biased composition (basic and acidic residues); the sequence is DHLGKAREPHT. A Glycyl lysine isopeptide (Lys-Gly) (interchain with G-Cter in SUMO2) cross-link involves residue Lys-652. Over residues 734 to 744 the composition is skewed to basic and acidic residues; that stretch reads EEDKFDKEEYR. The segment at 734-860 is disordered; the sequence is EEDKFDKEEY…VEPLDTGLSL (127 aa). Basic residues predominate over residues 745–754; it reads KKIKAKHRER. Over residues 755–774 the composition is skewed to basic and acidic residues; it reads RLKEREARREANKRQAKARD. A compositionally biased stretch (acidic residues) spans 775–789; that stretch reads EEEAFLDWSDEDDGG. Ser-783 is subject to Phosphoserine. A compositionally biased stretch (basic and acidic residues) spans 797–831; it reads DPDKHRSSEESESEDTNHKMSDTKKKQETRKRNNT.

This sequence belongs to the DEAD box helicase family. DDX10/DBP4 subfamily. Interacts with AIM2; this interaction promotes AIM2 stability. Interacts with SCNA; this interaction causes DDX10 mislocalization to the nucleoplasm and cytoplasmic inclusions.

It localises to the cytoplasm. Its subcellular location is the nucleus. The protein resides in the nucleolus. The catalysed reaction is ATP + H2O = ADP + phosphate + H(+). Functionally, putative ATP-dependent RNA helicase that plays various role in innate immunity or inflammation. Plays a role in the enhancement of AIM2-induced inflammasome activation by interacting with AIM2 and stabilizing its protein level. Negatively regulates viral infection by promoting interferon beta production and interferon stimulated genes/ISGs expression. The polypeptide is Probable ATP-dependent RNA helicase DDX10 (Ddx10) (Mus musculus (Mouse)).